The following is a 453-amino-acid chain: Gamma-aminobutyric acid receptor subunit alpha-6 (453 aa).

Residues 1-19 (MLLLLPWLFSLLWIENAQA) form the signal peptide. Residues 20-243 (QLEDEGNFYS…FHLQRKMGYF (224 aa)) are Extracellular-facing. N-linked (GlcNAc...) asparagine glycosylation is present at Asn31. A 4-aminobutanoate-binding site is contributed by Arg84. N-linked (GlcNAc...) asparagine glycans are attached at residues Asn128 and Asn141. Thr147 is a binding site for 4-aminobutanoate. A disulfide bridge connects residues Cys156 and Cys170. Residues 244-264 (MIQIYTPCIMTVILSQVSFWI) traverse the membrane as a helical segment. Residues 265 to 270 (NKESVP) lie on the Cytoplasmic side of the membrane. A helical membrane pass occupies residues 271–290 (ARTVFGITTVLTMTTLSISA). Topologically, residues 291–304 (RHSLPKVSYATAMD) are extracellular. Residues 305-325 (WFIAVCFAFVFSALIEFAAVN) traverse the membrane as a helical segment. The Cytoplasmic segment spans residues 326 to 422 (YFTNLQSQKA…GTSKIDQYSR (97 aa)). The residue at position 375 (Ser375) is a Phosphoserine. Thr403 is modified (phosphothreonine). A helical membrane pass occupies residues 423-443 (ILFPVAFAGFNLVYWIVYLSK). At 444–453 (DTMEVSSTVE) the chain is on the extracellular side.

Belongs to the ligand-gated ion channel (TC 1.A.9) family. Gamma-aminobutyric acid receptor (TC 1.A.9.5) subfamily. GABRA6 sub-subfamily. Heteropentamer, formed by a combination of alpha (GABRA1-6), beta (GABRB1-3), gamma (GABRG1-3), delta (GABRD), epsilon (GABRE), rho (GABRR1-3), pi (GABRP) and theta (GABRQ) chains, each subunit exhibiting distinct physiological and pharmacological properties. Binds UBQLN1. Expressed in brain, in cerebellar granule cells.

The protein resides in the postsynaptic cell membrane. Its subcellular location is the cell membrane. The catalysed reaction is chloride(in) = chloride(out). Its function is as follows. Alpha subunit of the heteropentameric ligand-gated chloride channel gated by gamma-aminobutyric acid (GABA), a major inhibitory neurotransmitter in the brain. GABA-gated chloride channels, also named GABA(A) receptors (GABAAR), consist of five subunits arranged around a central pore and contain GABA active binding site(s) located at the alpha and beta subunit interface(s). When activated by GABA, GABAARs selectively allow the flow of chloride anions across the cell membrane down their electrochemical gradient. Alpha-6/GABRA6 subunits are found at both synaptic and extrasynaptic sites. Chloride influx into the postsynaptic neuron following GABAAR opening decreases the neuron ability to generate a new action potential, thereby reducing nerve transmission. Extrasynaptic alpha-6-containing receptors contribute to the tonic GABAergic inhibition. Alpha-6 subunits are also present on glutamatergic synapses. The sequence is that of Gamma-aminobutyric acid receptor subunit alpha-6 from Rattus norvegicus (Rat).